Consider the following 875-residue polypeptide: Outer membrane usher protein FocD (875 aa).

The first 38 residues, M1–G38, serve as a signal peptide directing secretion. C852 and C874 are joined by a disulfide.

It belongs to the fimbrial export usher family.

The protein localises to the cell outer membrane. Involved in the export and assembly of the F1C fimbriae subunits across the outer membrane. This chain is Outer membrane usher protein FocD (focD), found in Escherichia coli.